The sequence spans 485 residues: Glutamyl-tRNA(Gln) amidotransferase subunit A (485 aa).

Residues K79 and S154 each act as charge relay system in the active site. Catalysis depends on S178, which acts as the Acyl-ester intermediate.

Belongs to the amidase family. GatA subfamily. In terms of assembly, heterotrimer of A, B and C subunits.

The catalysed reaction is L-glutamyl-tRNA(Gln) + L-glutamine + ATP + H2O = L-glutaminyl-tRNA(Gln) + L-glutamate + ADP + phosphate + H(+). In terms of biological role, allows the formation of correctly charged Gln-tRNA(Gln) through the transamidation of misacylated Glu-tRNA(Gln) in organisms which lack glutaminyl-tRNA synthetase. The reaction takes place in the presence of glutamine and ATP through an activated gamma-phospho-Glu-tRNA(Gln). The polypeptide is Glutamyl-tRNA(Gln) amidotransferase subunit A (Staphylococcus epidermidis (strain ATCC 12228 / FDA PCI 1200)).